Reading from the N-terminus, the 170-residue chain is Zinc finger matrin-type protein 5 (170 aa).

Residues 51-79 form a C3H1-type zinc finger; sequence EQNKRPCRKFLLTGQCDFGSNCRFSHMSE. The disordered stretch occupies residues 150 to 170; that stretch reads PPSLRAPPPGGWPLQPSVQWG.

As to quaternary structure, component of the U11/U12 snRNPs that are part of the U12-type spliceosome.

The protein localises to the nucleus. The chain is Zinc finger matrin-type protein 5 (ZMAT5) from Bos taurus (Bovine).